Consider the following 338-residue polypeptide: NADPH dehydrogenase (338 aa).

22–25 lines the FMN pocket; it reads SPMC. Y27 serves as a coordination point for substrate. The FMN site is built by A59 and Q101. 163–166 lines the substrate pocket; that stretch reads HAAH. Residues R214 and 306–307 contribute to the FMN site; that span reads GR.

Belongs to the NADH:flavin oxidoreductase/NADH oxidase family. NamA subfamily. Homotetramer. It depends on FMN as a cofactor.

The catalysed reaction is A + NADPH + H(+) = AH2 + NADP(+). Its function is as follows. Catalyzes the reduction of the double bond of an array of alpha,beta-unsaturated aldehydes and ketones. It also reduces the nitro group of nitroester and nitroaromatic compounds. It could have a role in detoxification processes. The polypeptide is NADPH dehydrogenase (Listeria monocytogenes serotype 4a (strain HCC23)).